A 67-amino-acid polypeptide reads, in one-letter code: Photosystem II reaction center protein H (67 aa).

Residues 27-47 traverse the membrane as a helical segment; sequence GAVPVMAFVGVLLLVFLVILL.

The protein belongs to the PsbH family. As to quaternary structure, PSII is composed of 1 copy each of membrane proteins PsbA, PsbB, PsbC, PsbD, PsbE, PsbF, PsbH, PsbI, PsbJ, PsbK, PsbL, PsbM, PsbT, PsbX, PsbY, Psb30/Ycf12, peripheral proteins PsbO, CyanoQ (PsbQ), PsbU, PsbV and a large number of cofactors. It forms dimeric complexes.

It localises to the cellular thylakoid membrane. Its function is as follows. One of the components of the core complex of photosystem II (PSII), required for its stability and/or assembly. PSII is a light-driven water:plastoquinone oxidoreductase that uses light energy to abstract electrons from H(2)O, generating O(2) and a proton gradient subsequently used for ATP formation. It consists of a core antenna complex that captures photons, and an electron transfer chain that converts photonic excitation into a charge separation. The sequence is that of Photosystem II reaction center protein H from Prochlorococcus marinus (strain SARG / CCMP1375 / SS120).